Reading from the N-terminus, the 321-residue chain is Nucleotide-binding protein GOX0815 (321 aa).

ATP is bound at residue 27 to 34 (GLSGAGKS). 72–75 (DVRS) serves as a coordination point for GTP.

This sequence belongs to the RapZ-like family.

In terms of biological role, displays ATPase and GTPase activities. This chain is Nucleotide-binding protein GOX0815, found in Gluconobacter oxydans (strain 621H) (Gluconobacter suboxydans).